An 85-amino-acid polypeptide reads, in one-letter code: ATP synthase subunit c (85 aa).

2 helical membrane-spanning segments follow: residues 10–30 (IAVALLIGLGALGTAIGFGLL) and 53–73 (FIVAGLLDAVTMIGVGIALFF).

This sequence belongs to the ATPase C chain family. In terms of assembly, F-type ATPases have 2 components, F(1) - the catalytic core - and F(0) - the membrane proton channel. F(1) has five subunits: alpha(3), beta(3), gamma(1), delta(1), epsilon(1). F(0) has three main subunits: a(1), b(2) and c(10-14). The alpha and beta chains form an alternating ring which encloses part of the gamma chain. F(1) is attached to F(0) by a central stalk formed by the gamma and epsilon chains, while a peripheral stalk is formed by the delta and b chains.

It localises to the cell inner membrane. Functionally, f(1)F(0) ATP synthase produces ATP from ADP in the presence of a proton or sodium gradient. F-type ATPases consist of two structural domains, F(1) containing the extramembraneous catalytic core and F(0) containing the membrane proton channel, linked together by a central stalk and a peripheral stalk. During catalysis, ATP synthesis in the catalytic domain of F(1) is coupled via a rotary mechanism of the central stalk subunits to proton translocation. In terms of biological role, key component of the F(0) channel; it plays a direct role in translocation across the membrane. A homomeric c-ring of between 10-14 subunits forms the central stalk rotor element with the F(1) delta and epsilon subunits. The protein is ATP synthase subunit c of Pseudomonas aeruginosa (strain LESB58).